Consider the following 299-residue polypeptide: tRNA pseudouridine synthase A (299 aa).

Aspartate 67 acts as the Nucleophile in catalysis. Tyrosine 125 provides a ligand contact to substrate.

It belongs to the tRNA pseudouridine synthase TruA family. Homodimer.

The catalysed reaction is uridine(38/39/40) in tRNA = pseudouridine(38/39/40) in tRNA. In terms of biological role, formation of pseudouridine at positions 38, 39 and 40 in the anticodon stem and loop of transfer RNAs. This chain is tRNA pseudouridine synthase A, found in Parasynechococcus marenigrum (strain WH8102).